Consider the following 741-residue polypeptide: uncharacterized protein (741 aa).

Residues 1–17 (MDSNTNENNSHASSNER) are compositionally biased toward polar residues. The segment at 1–50 (MDSNTNENNSHASSNERQSSEGHDDYLNRNPNSEATEGEEGTHPTTGTQP) is disordered. The span at 18-27 (QSSEGHDDYL) shows a compositional bias: basic and acidic residues. The segment at 107 to 150 (CPICYDDMNENDEKQATKMPCGHIFGKNCLQKWLENHCTCPLCR) adopts an RING-type 1; degenerate zinc-finger fold. Polar residues-rich tracts occupy residues 177–193 (GNQG…SNGV), 252–263 (PDSNTSTPTTRS), and 277–302 (NASS…NAFF). Disordered stretches follow at residues 177-214 (GNQG…RTGV), 238-387 (SATN…NTNR), 500-543 (QPAV…PGIT), 561-619 (ENRM…TPTH), 638-688 (STPS…PQCQ), and 713-741 (RCQQ…EEHK). Positions 316–332 (TSNLTSNSGSMTNSTST) are enriched in low complexity. Polar residues-rich tracts occupy residues 333-344 (DLPTSNLPSQNA) and 357-386 (PPNL…ANTN). 3 stretches are compositionally biased toward polar residues: residues 563-586 (RMNQ…SINV), 604-619 (ENSS…TPTH), and 652-661 (SKVSSGTSTP). The RING-type 2; degenerate zinc finger occupies 687-736 (CQLEDQGICDPNDRFVHFECGHSVHERCQQSTSNSENQMDEEIGECPKCR). A compositionally biased stretch (basic and acidic residues) spans 731-741 (ECPKCRNEEHK).

Its subcellular location is the nucleus. This is an uncharacterized protein from Schizosaccharomyces pombe (strain 972 / ATCC 24843) (Fission yeast).